Here is an 89-residue protein sequence, read N- to C-terminus: Small ribosomal subunit protein uS15 (89 aa).

Belongs to the universal ribosomal protein uS15 family. In terms of assembly, part of the 30S ribosomal subunit. Forms a bridge to the 50S subunit in the 70S ribosome, contacting the 23S rRNA.

One of the primary rRNA binding proteins, it binds directly to 16S rRNA where it helps nucleate assembly of the platform of the 30S subunit by binding and bridging several RNA helices of the 16S rRNA. Functionally, forms an intersubunit bridge (bridge B4) with the 23S rRNA of the 50S subunit in the ribosome. In Pectobacterium carotovorum subsp. carotovorum (strain PC1), this protein is Small ribosomal subunit protein uS15.